The chain runs to 512 residues: Anaerobic nitric oxide reductase transcription regulator NorR (512 aa).

The 230-residue stretch at 190 to 419 (MIGESLAMQE…LEHVISRAAV (230 aa)) folds into the Sigma-54 factor interaction domain. ATP is bound by residues 218–225 (GETGVGKE) and 281–290 (ADNGTLFLDE). Positions 487 to 506 (WAATARALQLDTGNLHRLAK) form a DNA-binding region, H-T-H motif.

It participates in nitrogen metabolism; nitric oxide reduction. Its function is as follows. Required for the expression of anaerobic nitric oxide (NO) reductase, acts as a transcriptional activator for at least the norVW operon. Activation also requires sigma-54. This chain is Anaerobic nitric oxide reductase transcription regulator NorR, found in Aliivibrio fischeri (strain ATCC 700601 / ES114) (Vibrio fischeri).